A 403-amino-acid chain; its full sequence is Formin-like protein 21b (403 aa).

The FH2 domain maps to 1–380 (MELLFTATLL…KAAKEAEMEK (380 aa)). The disordered stretch occupies residues 373–403 (AKEAEMEKTKKRVSLTNKKASGVGEEESCLI).

This sequence belongs to the formin-like family. Class-II subfamily.

The chain is Formin-like protein 21b (FH21B) from Arabidopsis thaliana (Mouse-ear cress).